We begin with the raw amino-acid sequence, 523 residues long: Factor arrest protein 8 (523 aa).

A coiled-coil region spans residues 26–76; the sequence is TKNERDRITWELERSEMKARIAELEGENRDLKHQLNQIQSKAVSPEGEKEE. The tract at residues 61–80 is disordered; sequence NQIQSKAVSPEGEKEEKHVP. The span at 71 to 80 shows a compositional bias: basic and acidic residues; sequence EGEKEEKHVP. Position 115 is a phosphoserine (serine 115). At threonine 132 the chain carries Phosphothreonine. Residues 150 to 171 are disordered; sequence ALLDTKPNPKQGPSESPSPTKV. A compositionally biased stretch (polar residues) spans 160–171; the sequence is QGPSESPSPTKV.

As to quaternary structure, component of a complex at least composed of FAR3, FAR7, FAR8, FAR10, FAR11 and VPS64.

The protein localises to the cytoplasm. It localises to the endoplasmic reticulum. Functionally, participates in the control of the reentry into the cell cycle following pheromone treatment. The polypeptide is Factor arrest protein 8 (FAR8) (Saccharomyces cerevisiae (strain ATCC 204508 / S288c) (Baker's yeast)).